The chain runs to 149 residues: Small ribosomal subunit protein bS18c (149 aa).

Residues methionine 1–glutamine 23 are disordered.

It belongs to the bacterial ribosomal protein bS18 family. As to quaternary structure, part of the 30S ribosomal subunit.

The protein resides in the plastid. The polypeptide is Small ribosomal subunit protein bS18c (Cuscuta obtusiflora (Peruvian dodder)).